We begin with the raw amino-acid sequence, 425 residues long: Protein CLP1 homolog (425 aa).

Residues glutamate 18, lysine 59, and 121–126 each bind ATP; that span reads DVGKST.

The protein belongs to the Clp1 family. Clp1 subfamily.

It localises to the nucleus. In terms of biological role, required for endonucleolytic cleavage during polyadenylation-dependent pre-mRNA 3'-end formation. In Drosophila mojavensis (Fruit fly), this protein is Protein CLP1 homolog (cbc).